We begin with the raw amino-acid sequence, 315 residues long: Methionyl-tRNA formyltransferase (315 aa).

111 to 114 (SLLP) is a binding site for (6S)-5,6,7,8-tetrahydrofolate.

This sequence belongs to the Fmt family.

The enzyme catalyses L-methionyl-tRNA(fMet) + (6R)-10-formyltetrahydrofolate = N-formyl-L-methionyl-tRNA(fMet) + (6S)-5,6,7,8-tetrahydrofolate + H(+). Functionally, attaches a formyl group to the free amino group of methionyl-tRNA(fMet). The formyl group appears to play a dual role in the initiator identity of N-formylmethionyl-tRNA by promoting its recognition by IF2 and preventing the misappropriation of this tRNA by the elongation apparatus. This Flavobacterium johnsoniae (strain ATCC 17061 / DSM 2064 / JCM 8514 / BCRC 14874 / CCUG 350202 / NBRC 14942 / NCIMB 11054 / UW101) (Cytophaga johnsonae) protein is Methionyl-tRNA formyltransferase.